A 171-amino-acid chain; its full sequence is Photosystem I reaction center subunit N, chloroplastic (171 aa).

A chloroplast-targeting transit peptide spans 1–49 (MAAMNSSVLTCSYAIAGSGSVELNQKVGLVNSSVGFGQKKQMIMPVIKA). The N-terminal 37 residues, 50 to 86 (QRVVGDDVDGSNGRRSAMVFLAATLFSTAAVSASANA), are a transit peptide targeting the thylakoid. G87 carries the post-translational modification N-acetylglycine; partial.

It belongs to the psaN family. In terms of assembly, interacts with GRF5, GRF7, GRF9 and GRF10. The transit peptide is the site of PSAN that associates with 14-3-3.

It localises to the plastid. Its subcellular location is the chloroplast thylakoid membrane. In terms of biological role, may function in mediating the binding of the antenna complexes to the PSI reaction center and core antenna. Plays an important role in docking plastocyanin to the PSI complex. Does not bind pigments. This is Photosystem I reaction center subunit N, chloroplastic (PSAN) from Arabidopsis thaliana (Mouse-ear cress).